We begin with the raw amino-acid sequence, 496 residues long: Costunolide synthase (496 aa).

A helical; Signal-anchor for type II membrane protein transmembrane segment spans residues 4–24 (FTIFSLVVASLVFFACWALVA). Asparagine 26, asparagine 168, asparagine 280, and asparagine 412 each carry an N-linked (GlcNAc...) asparagine glycan. A heme-binding site is contributed by cysteine 434.

The protein belongs to the cytochrome P450 family. Requires heme as cofactor. In terms of tissue distribution, expressed in floral glandular trichomes.

It is found in the membrane. The catalysed reaction is germacra-1(10),4,11(13)-trien-12-oate + reduced [NADPH--hemoprotein reductase] + O2 = (+)-costunolide + oxidized [NADPH--hemoprotein reductase] + 2 H2O. The protein operates within secondary metabolite biosynthesis; terpenoid biosynthesis. In terms of biological role, involved in the biosynthesis of germacrene-derived sesquiterpene lactones. Component of the parthenolide biosynthetic pathway; parthenolide and conjugates are promising anti-cancer drugs highly active against colon cancer cells. Hydroxylates germacrene A acid to 6-alpha-hydroxy-germacrene A acid, a precursor of sesquiterpene lactones that spontaneously undergoes a lactonization which yields costunolide. This chain is Costunolide synthase, found in Tanacetum parthenium (Feverfew).